The chain runs to 539 residues: Probable malate:quinone oxidoreductase (539 aa).

This sequence belongs to the MQO family. Requires FAD as cofactor.

It catalyses the reaction (S)-malate + a quinone = a quinol + oxaloacetate. The protein operates within carbohydrate metabolism; tricarboxylic acid cycle; oxaloacetate from (S)-malate (quinone route): step 1/1. The chain is Probable malate:quinone oxidoreductase from Sodalis glossinidius (strain morsitans).